A 286-amino-acid chain; its full sequence is 3-hydroxyanthranilate 3,4-dioxygenase (286 aa).

A domain A (catalytic) region spans residues 1-160 (MERPVRVKAW…SEQYRTGKPN (160 aa)). An O2-binding site is contributed by Arg43. 3 residues coordinate Fe cation: His47, Glu53, and His91. A substrate-binding site is contributed by Glu53. Positions 95 and 105 each coordinate substrate. The interval 161-177 (PDQLLKEPPFPLSTRSV) is linker. The segment at 178–286 (MEPMCLEAWL…QDPACKKSLG (109 aa)) is domain B.

Belongs to the 3-HAO family. As to quaternary structure, monomer. Fe(2+) is required as a cofactor.

It localises to the cytoplasm. The protein resides in the cytosol. It catalyses the reaction 3-hydroxyanthranilate + O2 = (2Z,4Z)-2-amino-3-carboxymuconate 6-semialdehyde. It functions in the pathway cofactor biosynthesis; NAD(+) biosynthesis; quinolinate from L-kynurenine: step 3/3. Catalyzes the oxidative ring opening of 3-hydroxyanthranilate to 2-amino-3-carboxymuconate semialdehyde, which spontaneously cyclizes to quinolinate. The protein is 3-hydroxyanthranilate 3,4-dioxygenase of Bos taurus (Bovine).